The primary structure comprises 442 residues: MSSESLTVIVGLGKTGLSCAQFLAAKNQPFAVMDSREEPPEWENFIKTYPRVELIRGQFSEKLLNEAQEIILSPGVSLQEPLIAKQAAQGKSIIGDIELFARNVNKPIIAITGSNGKTTVTTVVGLMMKAAGRNVSVCGNIGEPVLEQITPEPDYYVLELSSFQLETTFSLRSQAATILNISEDHMNRYATLQDYLRAKQRIYTDCFIPIVNADEPEIWCHLPFNKKPLSFGLNNAADFSLAEHNQKTSIAYQGKILMPIQELKLNARHHLQNALAALALGTAAKIPIENMLHLLRDFSGIRHRCQWVRKYKEIDYYNDSKGTNVGATRAAIESLGQAAKGQLILIAGGQGKGADFSPLKDVVKRYVKQVILIGEDAPLLEKTLKEITVIKHADSMNEAVKRSTQAAKAGDIVLLSPACASFDMFTNYEHRGDVFTETVEAL.

Position 113-119 (113-119 (GSNGKTT)) interacts with ATP.

It belongs to the MurCDEF family.

It localises to the cytoplasm. The catalysed reaction is UDP-N-acetyl-alpha-D-muramoyl-L-alanine + D-glutamate + ATP = UDP-N-acetyl-alpha-D-muramoyl-L-alanyl-D-glutamate + ADP + phosphate + H(+). It functions in the pathway cell wall biogenesis; peptidoglycan biosynthesis. Functionally, cell wall formation. Catalyzes the addition of glutamate to the nucleotide precursor UDP-N-acetylmuramoyl-L-alanine (UMA). The protein is UDP-N-acetylmuramoylalanine--D-glutamate ligase of Coxiella burnetii (strain CbuK_Q154) (Coxiella burnetii (strain Q154)).